The chain runs to 249 residues: MPVISMKQLLEAGVHFGHQTRRWNPKMKKYIFTERNGIYIIDLQKTVKKVDEAFNFMREVASDNGTILFVGTKKQAQESVRDEAIRSGQYFVNHRWLGGTLTNFETIQKRIQHLKKIERMEADGTFEVLPKKEVVLLKKEQEKLERFLGGIKDMKGLPDALFIVDPRKERIAVAEARKLHIPIIGIVDTNCDPDEIDYVIPANDDAIRAVKLLTAKMADAIIEVNQGEELTEAEVAPVEEKATEETTEA.

The protein belongs to the universal ribosomal protein uS2 family.

The sequence is that of Small ribosomal subunit protein uS2 from Listeria monocytogenes serovar 1/2a (strain ATCC BAA-679 / EGD-e).